The chain runs to 1009 residues: DNA ligase 4 (1009 aa).

Disordered regions lie at residues Met-1 to Leu-34 and Lys-51 to Ala-72. The segment covering Lys-51–Gly-65 has biased composition (basic residues). The ATP site is built by Glu-315, Lys-317, Leu-318, Arg-322, Glu-384, Phe-424, Glu-484, Lys-489, Lys-506, and Lys-508. Lys-317 acts as the N6-AMP-lysine intermediate in catalysis. A Mg(2+)-binding site is contributed by Glu-384. Glu-484 serves as a coordination point for Mg(2+). BRCT domains follow at residues Pro-715–Leu-808 and Pro-887–Pro-995.

Belongs to the ATP-dependent DNA ligase family. Mg(2+) serves as cofactor.

The protein localises to the nucleus. It carries out the reaction ATP + (deoxyribonucleotide)n-3'-hydroxyl + 5'-phospho-(deoxyribonucleotide)m = (deoxyribonucleotide)n+m + AMP + diphosphate.. In terms of biological role, DNA ligase involved in DNA non-homologous end joining (NHEJ); required for double-strand break (DSB) repair. The chain is DNA ligase 4 (lig4) from Emericella nidulans (strain FGSC A4 / ATCC 38163 / CBS 112.46 / NRRL 194 / M139) (Aspergillus nidulans).